We begin with the raw amino-acid sequence, 260 residues long: MQLTGASMFLVWVGLLSWVSCRVDASEGFPSPLKRCKLQDESCLLAQAQTFFQAFKNGIPERQVAALEPIALGTMFIESGGHSESIKFKLTMSDAKLYNLANSMMVKSLKGFTKDLTRPLKLTLLLDNPELEVRAKYDVDGKLLILPIVSKGDLTIRLNDVHTKVWITAEPVKRSDGHTYLNITDYKTATKIKGGHFDLSNLFNDNKELRDSTLKVLNQEWSTLALDVQPKINEACAKAFSAIVQSLWANIPYDEFFEKE.

A signal peptide spans 1–25 (MQLTGASMFLVWVGLLSWVSCRVDA).

The protein belongs to the TO family. In terms of tissue distribution, epidermis of newly eclosed adults.

In terms of biological role, component of the circadian clock or downstream effector of clock function. Required for suppressing daytime sleep (siesta) under ambient environmental temperatures. Part of a heat avoidance mechanism that modulates daytime sleep behavior under different environmental temperatures to minimize the risk of heat exposure. Under cooler ambient temperatures, suppresses daytime sleep (siesta) and thus allows for longer periods of daytime activity. The chain is Circadian clock-controlled protein daywake from Drosophila melanogaster (Fruit fly).